We begin with the raw amino-acid sequence, 563 residues long: CTP synthase (563 aa).

The interval methionine 1 to leucine 278 is amidoligase domain. Residue serine 24 participates in CTP binding. Serine 24 contributes to the UTP binding site. Serine 25–isoleucine 30 is a binding site for ATP. L-glutamine is bound at residue tyrosine 65. Aspartate 82 contributes to the ATP binding site. Mg(2+)-binding residues include aspartate 82 and glutamate 151. CTP is bound by residues aspartate 158 to glutamate 160, lysine 198 to glutamine 203, and lysine 234. UTP contacts are provided by residues lysine 198–glutamine 203 and lysine 234. Lysine 250–valine 252 lines the ATP pocket. The Glutamine amidotransferase type-1 domain maps to threonine 303–alanine 545. Glycine 363 contributes to the L-glutamine binding site. Catalysis depends on cysteine 390, which acts as the Nucleophile; for glutamine hydrolysis. L-glutamine-binding positions include leucine 391–glutamine 394, glutamate 414, and arginine 471. Active-site residues include histidine 518 and glutamate 520. Residues glutamine 542–lysine 563 are disordered.

It belongs to the CTP synthase family. Homotetramer.

It carries out the reaction UTP + L-glutamine + ATP + H2O = CTP + L-glutamate + ADP + phosphate + 2 H(+). The enzyme catalyses L-glutamine + H2O = L-glutamate + NH4(+). The catalysed reaction is UTP + NH4(+) + ATP = CTP + ADP + phosphate + 2 H(+). It functions in the pathway pyrimidine metabolism; CTP biosynthesis via de novo pathway; CTP from UDP: step 2/2. Its activity is regulated as follows. Allosterically activated by GTP, when glutamine is the substrate; GTP has no effect on the reaction when ammonia is the substrate. The allosteric effector GTP functions by stabilizing the protein conformation that binds the tetrahedral intermediate(s) formed during glutamine hydrolysis. Inhibited by the product CTP, via allosteric rather than competitive inhibition. Functionally, catalyzes the ATP-dependent amination of UTP to CTP with either L-glutamine or ammonia as the source of nitrogen. Regulates intracellular CTP levels through interactions with the four ribonucleotide triphosphates. This is CTP synthase from Fibrobacter succinogenes (strain ATCC 19169 / S85).